The primary structure comprises 196 residues: Imidazoleglycerol-phosphate dehydratase (196 aa).

Belongs to the imidazoleglycerol-phosphate dehydratase family.

It localises to the cytoplasm. The catalysed reaction is D-erythro-1-(imidazol-4-yl)glycerol 3-phosphate = 3-(imidazol-4-yl)-2-oxopropyl phosphate + H2O. Its pathway is amino-acid biosynthesis; L-histidine biosynthesis; L-histidine from 5-phospho-alpha-D-ribose 1-diphosphate: step 6/9. In Dehalococcoides mccartyi (strain ATCC BAA-2266 / KCTC 15142 / 195) (Dehalococcoides ethenogenes (strain 195)), this protein is Imidazoleglycerol-phosphate dehydratase.